The primary structure comprises 462 residues: Coagulation factor IX (462 aa).

An N-terminal signal peptide occupies residues 1 to 21 (MADAPGLIPIFLLGYLLSTEC). Positions 22-39 (AVFLDRENATKILTRPKR) are excised as a propeptide. Residues Tyr-40, Asn-41, Glu-46, Glu-47, Glu-54, Glu-56, Glu-59, Glu-60, Glu-65, Glu-66, and Glu-69 each contribute to the Ca(2+) site. Residues 40 to 86 (YNSGKLEEFVQGNLERECIEERCSFEEAREVFENTEKTTEFWKQYVD) enclose the Gla domain. 4-carboxyglutamate occurs at positions 46, 47, 54, 56, 59, 60, 65, 66, 69, 72, and 75. Glu-54 contributes to the Mg(2+) binding site. Cys-57 and Cys-62 are joined by a disulfide. Position 59 (Glu-59) interacts with Mg(2+). Position 65 (Glu-65) interacts with Mg(2+). Residue Glu-69 participates in Mg(2+) binding. Residue Glu-75 coordinates Ca(2+). Glu-75 contributes to the Mg(2+) binding site. The O-linked (GalNAc...) threonine glycan is linked to Thr-78. Ca(2+)-binding residues include Glu-79, Asp-86, Gly-87, and Gln-89. Position 79 is a 4-carboxyglutamate (Glu-79). Residue Glu-79 participates in Mg(2+) binding. Positions 86 to 122 (DGDQCESNPCLNGGICKDDINSYECWCQAGFEGRNCE) constitute an EGF-like; calcium-binding domain. 10 disulfide bridges follow: Cys-90-Cys-101, Cys-95-Cys-110, Cys-112-Cys-121, Cys-127-Cys-138, Cys-134-Cys-148, Cys-150-Cys-163, Cys-171-Cys-336, Cys-253-Cys-269, Cys-383-Cys-397, and Cys-408-Cys-436. O-linked (Glc...) serine glycosylation is present at Ser-92. The Ca(2+) site is built by Asp-103 and Asp-104. A (3R)-3-hydroxyaspartate modification is found at Asp-103. A Phosphoserine modification is found at Ser-107. A propeptide spans 186-227 (AETVFSNTDYGNSTELILDDITNSTILDNLTENSEPINDFTR) (activation peptide). Position 195 is a sulfotyrosine (Tyr-195). At Ser-198 the chain carries Phosphoserine. Thr-199 carries the phosphothreonine; alternate modification. Thr-199 is a glycosylation site (O-linked (GalNAc...) threonine; alternate). Residues Asn-208 and Asn-214 are each glycosylated (N-linked (GlcNAc...) asparagine). Residues Thr-216 and Thr-226 are each glycosylated (O-linked (GalNAc...) threonine). Residues 228–460 (VVGGENAKPG…YVNWIKEKTK (233 aa)) enclose the Peptidase S1 domain. His-268 acts as the Charge relay system in catalysis. Positions 282, 284, 287, 289, and 292 each coordinate Ca(2+). Asn-307 carries N-linked (GlcNAc...) asparagine glycosylation. Asp-316 functions as the Charge relay system in the catalytic mechanism. Ser-412 serves as the catalytic Charge relay system.

It belongs to the peptidase S1 family. Heterodimer of a light chain and a heavy chain; disulfide-linked. Interacts (inactive and activated) with F11 (activated) in calcium-dependent manner. Interacts with SERPINC1. Interacts (inactive and activated) with nitrophorin-2, an anticoagulant protein from Rhodnius prolixus. In terms of processing, activated by factor XIa, which excises the activation peptide. The propeptide can also be removed by snake venom protease. Activated by coagulation factor VIIa-tissue factor (F7-F3) complex in calcium-dependent manner. The iron and 2-oxoglutarate dependent 3-hydroxylation of aspartate and asparagine is (R) stereospecific within EGF domains. Post-translationally, predominantly O-glucosylated at Ser-92 by POGLUT1 in vitro.

Its subcellular location is the secreted. The catalysed reaction is Selective cleavage of Arg-|-Ile bond in factor X to form factor Xa.. Factor IX is a vitamin K-dependent plasma protein that participates in the intrinsic pathway of blood coagulation by converting factor X to its active form in the presence of Ca(2+) ions, phospholipids, and factor VIIIa. The protein is Coagulation factor IX (F9) of Rattus norvegicus (Rat).